The primary structure comprises 522 residues: 2-isopropylmalate synthase (522 aa).

Positions 5–267 (VIIFDTTLRD…ETGINAKEIH (263 aa)) constitute a Pyruvate carboxyltransferase domain. 4 residues coordinate Mn(2+): aspartate 14, histidine 202, histidine 204, and asparagine 238. The interval 392–522 (QLQQLVVQSD…MQKNRELGGV (131 aa)) is regulatory domain.

It belongs to the alpha-IPM synthase/homocitrate synthase family. LeuA type 1 subfamily. In terms of assembly, homodimer. It depends on Mn(2+) as a cofactor.

It localises to the cytoplasm. The catalysed reaction is 3-methyl-2-oxobutanoate + acetyl-CoA + H2O = (2S)-2-isopropylmalate + CoA + H(+). The protein operates within amino-acid biosynthesis; L-leucine biosynthesis; L-leucine from 3-methyl-2-oxobutanoate: step 1/4. Its function is as follows. Catalyzes the condensation of the acetyl group of acetyl-CoA with 3-methyl-2-oxobutanoate (2-ketoisovalerate) to form 3-carboxy-3-hydroxy-4-methylpentanoate (2-isopropylmalate). The chain is 2-isopropylmalate synthase from Shewanella baltica (strain OS155 / ATCC BAA-1091).